The following is a 179-amino-acid chain: Prion-like protein doppel (179 aa).

The first 25 residues, 1–25 (MKNRLGTWWVAILCMLLASHLSTVK), serve as a signal peptide directing secretion. A flexible tail region spans residues 27–50 (RGIKHRFKWNRKVLPSSGGQITEA). A globular region spans residues 51–155 (RVAENRPGAF…KHCDFWLERG (105 aa)). 2 disulfide bridges follow: C95-C148 and C109-C143. Residues N99 and N111 are each glycosylated (N-linked (GlcNAc...) asparagine). The segment at 125–142 (KQDSKLHQRVLWRLIKEI) is cu(2+) binding. G155 is lipidated: GPI-anchor amidated glycine. Positions 156–179 (AALRVAVDQPAMVCLLGFVWFIVK) are cleaved as a propeptide — removed in mature form.

Belongs to the prion family. Post-translationally, N-glycosylated. N-glycosylated at two distinct sites. O-glycosylated. As to expression, detected in testis. Detected within seminiferous tubules, on round and elongated spermatids (at protein level). Not detected in brain (at protein level). Detected in testis, and at low levels in heart. Expression in brain is very low and barely detectable.

It localises to the cell membrane. In terms of biological role, required for normal acrosome reaction and for normal male fertility. Can bind Cu(2+). The sequence is that of Prion-like protein doppel (Prnd) from Mus musculus (Mouse).